Reading from the N-terminus, the 327-residue chain is Voltage-dependent calcium channel gamma-4 subunit (327 aa).

Residues 1-9 (MVRCDRGLQ) lie on the Cytoplasmic side of the membrane. Residues 10–30 (MLLTTAGAFAAFSLMAIAIGT) traverse the membrane as a helical segment. Residues 31–107 (DYWLYSSAHI…EYLLRIVRAS (77 aa)) are Extracellular-facing. 2 N-linked (GlcNAc...) asparagine glycosylation sites follow: N42 and N45. The helical transmembrane segment at 108–128 (SVFPILSTILLLLGGLCIGAG) threads the bilayer. Topologically, residues 129 to 136 (RIYSRKNN) are cytoplasmic. A helical membrane pass occupies residues 137-157 (IVLSAGILFVAAGLSNIIGII). Over 158–186 (VYISSNTGDPSDKRDEDKKNHYNYGWSFY) the chain is Extracellular. A helical membrane pass occupies residues 187–207 (FGALSFIVAETVGVLAVNIYI). The Cytoplasmic portion of the chain corresponds to 208–327 (EKNKELRFKT…SMLNRRTTPV (120 aa)). Residues 235 to 261 (SYRYRRRRSRSSSRSTEASPSRDVSPM) are disordered. Positions 246–256 (SSRSTEASPSR) are enriched in low complexity. Phosphoserine is present on S259.

The protein belongs to the PMP-22/EMP/MP20 family. CACNG subfamily. Interacts with CACNA1C. Identified in a complex with the L-type calcium channel subunits CACNA1C, CACNA2D1 and either CACNB1 or CACNB2. Acts as an auxiliary subunit for AMPA-selective glutamate receptors (AMPARs). Interacts with GRIA1. In terms of tissue distribution, detected in heart left ventricle.

It localises to the cell membrane. Its function is as follows. Regulates the activity of L-type calcium channels that contain CACNA1C as pore-forming subunit. Regulates the trafficking and gating properties of AMPA-selective glutamate receptors (AMPARs), including GRIA1 and GRIA4. Promotes their targeting to the cell membrane and synapses and modulates their gating properties by slowing their rates of activation, deactivation and desensitization and by mediating their resensitization. In Homo sapiens (Human), this protein is Voltage-dependent calcium channel gamma-4 subunit (CACNG4).